The sequence spans 582 residues: MGPKSKEYENPSSYKNDEDNDDDGDFVLENVMSEEDIEIETPSRNRKRVSTTRRTPSKPIRSQPLTPSSSKGAGNEPKSQNSSTTRGSAKKQSSKGLEEKLINSYGTHVESLNKGRRLIEIWKYYETAPGQSSFEGQTSSDSKLQTLLNLDGQQLLSYSENPFYLFEVKNLSISFHFESPQQVEPCQPVNPFKENPQKSGFVVNTGIPLSSVSWLPTNKETQFLAVGGMLKFSETTESVFMRTSGRNQIQLWKLENKTNFKSEFILYHDWGSVLQLEWCPTISVEDSILGFLAVVCSDGKLRVLRVPRSPVKFHVFVEQADFTFGFNDSLISCCTWVSPEHGDIHQILVGCSNGYLALWDILSSQECPLFYIPYHDSYIHNVVQCLDDFPWLFLTTAFDCYTRIFDIRDPIIDNRPLSHKRDICYTITWNNMLQSIISCSESQSVVIESLRGTSTQLLDERNGSIISLSNSKFHPFVACAASDGIVTIVNPFRLLGFSHKQKANVHRIFQLEYSEKQDSYRMLDGFRPRLPKAKKLDMYIYPWQIQVNKVEWNGNKGYAGWLASGMACGILRVEDLSAVERR.

The tract at residues 1-97 is disordered; sequence MGPKSKEYEN…SAKKQSSKGL (97 aa). Residues 18-39 are compositionally biased toward acidic residues; sequence EDNDDDGDFVLENVMSEEDIEI. Residues 63–87 show a composition bias toward polar residues; sequence QPLTPSSSKGAGNEPKSQNSSTTRG. WD repeat units lie at residues 221 to 262, 268 to 314, and 326 to 369; these read TQFL…NFKS, HDWG…VKFH, and FNDS…ECPL.

Component of the TFIIIC complex including sfc1, sfc3, sfc4, sfc6 and sfc7. The subunits are organized in two globular domains, tauA and tauB, connected by a proteolysis-sensitive and flexible linker. Interacts with sfc1, sfc3 and sfc4.

The protein resides in the nucleus. Its function is as follows. TFIIIC mediates tRNA and 5S RNA gene activation by binding to intragenic promoter elements. Upstream of the transcription start site, TFIIIC assembles the initiation complex TFIIIB-TFIIIC-tDNA, which is sufficient for RNA polymerase III recruitment and function. Part of the tauB domain of TFIIIC that binds boxB DNA promoter sites of tRNA and similar genes. Cooperates with sfc3 in DNA binding. Localizes to chromatin insulator sequence without recruiting RNA polymerase III and plays a role in nuclear organization. In Schizosaccharomyces pombe (strain 972 / ATCC 24843) (Fission yeast), this protein is Transcription factor tau subunit sfc6.